We begin with the raw amino-acid sequence, 496 residues long: Guanosine-5'-triphosphate,3'-diphosphate pyrophosphatase (496 aa).

Belongs to the GppA/Ppx family. GppA subfamily.

The enzyme catalyses guanosine 3'-diphosphate 5'-triphosphate + H2O = guanosine 3',5'-bis(diphosphate) + phosphate + H(+). The protein operates within purine metabolism; ppGpp biosynthesis; ppGpp from GTP: step 2/2. Catalyzes the conversion of pppGpp to ppGpp. Guanosine pentaphosphate (pppGpp) is a cytoplasmic signaling molecule which together with ppGpp controls the 'stringent response', an adaptive process that allows bacteria to respond to amino acid starvation, resulting in the coordinated regulation of numerous cellular activities. This Aeromonas salmonicida (strain A449) protein is Guanosine-5'-triphosphate,3'-diphosphate pyrophosphatase.